The sequence spans 283 residues: Bifunctional protein FolD (283 aa).

166 to 168 (GAS) is a binding site for NADP(+).

This sequence belongs to the tetrahydrofolate dehydrogenase/cyclohydrolase family. In terms of assembly, homodimer.

It catalyses the reaction (6R)-5,10-methylene-5,6,7,8-tetrahydrofolate + NADP(+) = (6R)-5,10-methenyltetrahydrofolate + NADPH. It carries out the reaction (6R)-5,10-methenyltetrahydrofolate + H2O = (6R)-10-formyltetrahydrofolate + H(+). The protein operates within one-carbon metabolism; tetrahydrofolate interconversion. Catalyzes the oxidation of 5,10-methylenetetrahydrofolate to 5,10-methenyltetrahydrofolate and then the hydrolysis of 5,10-methenyltetrahydrofolate to 10-formyltetrahydrofolate. The protein is Bifunctional protein FolD of Coxiella burnetii (strain CbuG_Q212) (Coxiella burnetii (strain Q212)).